The following is a 306-amino-acid chain: Curved DNA-binding protein (306 aa).

The J domain occupies 5-69 (DYYAIMGVKP…QRRAEYDQLW (65 aa)).

The protein resides in the cytoplasm. The protein localises to the nucleoid. Its function is as follows. DNA-binding protein that preferentially recognizes a curved DNA sequence. It is probably a functional analog of DnaJ; displays overlapping activities with DnaJ, but functions under different conditions, probably acting as a molecular chaperone in an adaptive response to environmental stresses other than heat shock. Lacks autonomous chaperone activity; binds native substrates and targets them for recognition by DnaK. Its activity is inhibited by the binding of CbpM. This is Curved DNA-binding protein from Citrobacter koseri (strain ATCC BAA-895 / CDC 4225-83 / SGSC4696).